Consider the following 989-residue polypeptide: Mediator of RNA polymerase II transcription subunit 24 (989 aa).

6 short sequence motifs (LXXLL motif) span residues 343-347 (LTPLL), 359-363 (LSLLL), 447-451 (LDLLL), 556-560 (LVALL), 787-791 (LPRLL), and 857-861 (LMRLL).

It belongs to the Mediator complex subunit 24 family. As to quaternary structure, component of the Mediator complex.

It localises to the nucleus. Component of the Mediator complex, a coactivator involved in the regulated transcription of nearly all RNA polymerase II-dependent genes. Mediator functions as a bridge to convey information from gene-specific regulatory proteins to the basal RNA polymerase II transcription machinery. Mediator is recruited to promoters by direct interactions with regulatory proteins and serves as a scaffold for the assembly of a functional preinitiation complex with RNA polymerase II and the general transcription factors. Required for proliferation of enteric nervous system precursors. Required for the development of dopaminergic amacrine cells and rod photoreceptor cells in the retina. The polypeptide is Mediator of RNA polymerase II transcription subunit 24 (med24) (Danio rerio (Zebrafish)).